A 317-amino-acid polypeptide reads, in one-letter code: Apolipoprotein E (317 aa).

Residues 1-18 (MRVLWVALVVTLLAGCRT) form the signal peptide. A run of 8 repeats spans residues 79–100 (ELIEESMKEVKAYREELEAQLG), 101–122 (PVTQETQARLSKELQAAQARVG), 123–144 (ADMEDVRNRLVLYRSEVHNMLG), 145–166 (QTTEELRSRLASHLRNVRKRLV), 167–188 (RDTEDLQKRLAVYQAGLREGAE), 189–210 (RSVSALRERLGPLVEQGRLRAA), 211–232 (TLSTRAGQPLRERAEAWGQKLR), and 233–254 (GRLEEMGSRTRDRLDEMRDELE). The 8 X 22 AA approximate tandem repeats stretch occupies residues 79 to 254 (ELIEESMKEV…RLDEMRDELE (176 aa)). Residue Met-142 is modified to Methionine sulfoxide. An LDL and other lipoprotein receptors binding region spans residues 157 to 167 (HLRNVRKRLVR). 161 to 164 (VRKR) contacts heparin. A lipid-binding and lipoprotein association region spans residues 209–289 (AATLSTRAGQ…GWFEPLVEDM (81 aa)). 228 to 235 (GQKLRGRL) is a heparin binding site. The interval 265-317 (SQLRLQAEAFQARLKGWFEPLVEDMRRQWAGLVERMQSAVSISSSTSAPSDNQ) is homooligomerization. The specificity for association with VLDL stretch occupies residues 277–289 (RLKGWFEPLVEDM).

It belongs to the apolipoprotein A1/A4/E family. In terms of assembly, homotetramer. May interact with ABCA1; functionally associated with ABCA1 in the biogenesis of HDLs. May interact with APP/A4 amyloid-beta peptide; the interaction is extremely stable in vitro but its physiological significance is unclear. May interact with MAPT. May interact with MAP2. In the cerebrospinal fluid, interacts with secreted SORL1. Interacts with PMEL; this allows the loading of PMEL luminal fragment on ILVs to induce fibril nucleation. In terms of processing, APOE exists as multiple glycosylated and sialylated glycoforms within cells and in plasma. The extent of glycosylation and sialylation are tissue and context specific. Glycated in plasma VLDL. Post-translationally, phosphorylated by FAM20C in the extracellular medium.

Its subcellular location is the secreted. The protein localises to the extracellular space. It localises to the extracellular matrix. It is found in the extracellular vesicle. The protein resides in the endosome. Its subcellular location is the multivesicular body. Functionally, APOE is an apolipoprotein, a protein associating with lipid particles, that mainly functions in lipoprotein-mediated lipid transport between organs via the plasma and interstitial fluids. APOE is a core component of plasma lipoproteins and is involved in their production, conversion and clearance. Apolipoproteins are amphipathic molecules that interact both with lipids of the lipoprotein particle core and the aqueous environment of the plasma. As such, APOE associates with chylomicrons, chylomicron remnants, very low density lipoproteins (VLDL) and intermediate density lipoproteins (IDL) but shows a preferential binding to high-density lipoproteins (HDL). It also binds a wide range of cellular receptors including the LDL receptor/LDLR and the very low-density lipoprotein receptor/VLDLR that mediate the cellular uptake of the APOE-containing lipoprotein particles. Finally, APOE also has a heparin-binding activity and binds heparan-sulfate proteoglycans on the surface of cells, a property that supports the capture and the receptor-mediated uptake of APOE-containing lipoproteins by cells. The chain is Apolipoprotein E (APOE) from Sus scrofa (Pig).